The sequence spans 863 residues: MSSPTSTPSRRRNKRGRGSNPPTPHGEEVQSPPSQRRRTEDSTSIGELLPMPTSPSGDLQSPSGQELMFSSPAPSRHSALQSELDLSSPLTYGTPSSRVEGTPRSGIRGTPARQRPDLGSARKVKQVDLHSDQPAAEELVTSEQSLGQKLVIWGTDVNVATCKEKFQRFVQRFIDPLAKEEENVGLDLNEPIYMQRLEEINVVGEPFLNVDCDHLRSFDQDLYRQLVCYPQEVIPTFDMAANEIFFERYPDSILEHQIQVRPYNALKTRNMRSLNPEDIDQLITISGMVIRTSQIIPEMQEAFFKCQVCAFTTRVEIDRGRISEPSVCKHCNTTHSMALIHNRSMFSDKQMIKLQESPEDMPAGQTPHTTILYGHNDLVDKVQPGDRVNVTGIYRAVPIRVNPRVRNVKSVYKTHIDVIHYRKTDAKRLHGIDEDTEQKMFTEERVAMLKELAAKPDIYERLASALAPSIYEHEDIKKGILLQLFGGTRKDFSHTGRGKFRAEVNILLCGDPGTSKSQLLQYVYNLVPRGQYTSGKGSSAVGLTAYVMKDPETRQLVLQTGALVLSDNGICCIDEFDKMNESTRSVLHEVMEQQTLSIAKAGIICQLNARTSVLAAANPVESQWNPKKTTIENIQLPHTLLSRFDLIFLMLDPQDETYDRRLAHHLVALYYQSEEQMKEEHLDMAVLKDYIAYARTYVNPRLGEEASQALIEAYVDMRKIGSGRGMVSAYPRQLESLIRLSEAHAKVRFSSKVETIDVEEAKRLHREALKQSATDPRTGIVDISILTTGMSATARKRKEELAQVLKKLIQSKGKTPALKYQQLFEDLRGQSDAAVTKDMFDEALHALADEDYLTVTGKTVRLL.

The interval 1 to 121 (MSSPTSTPSR…ARQRPDLGSA (121 aa)) is disordered. 2 stretches are compositionally biased toward polar residues: residues 54–64 (SPSGDLQSPSG) and 78–99 (SALQSELDLSSPLTYGTPSSRV). Residues 306–331 (CQVCAFTTRVEIDRGRISEPSVCKHC) form a C4-type zinc finger. An MCM domain is found at 458 to 667 (IYERLASALA…YDRRLAHHLV (210 aa)). Positions 471, 497, 516, 517, 618, 643, 732, and 735 each coordinate ATP. The Arginine finger motif lies at 642 to 645 (SRFD).

Belongs to the MCM family. Component of the mcm2-7 complex (RLF-M). The complex forms a toroidal hexameric ring with the proposed subunit order mcm2-mcm6-mcm4-mcm7-mcm3-mcm5. The heterodimer of mmcm3/mcm5 interacts with mcm4, mmcm6, mcm7 and weakly with mcm2. Component of the CMG helicase complex, composed of the mcm2-7 complex, the GINS complex and cdc45. Hyperphosphorylated during mitosis in a mechanism requiring cdc2-cyclin B and other kinases. Undergoes dephosphorylation after exiting mitosis, existing in a partially phosphorylated state in the cytosolic interphase mcm complex which associates with the pre-replication complexes (pre-Rcs). Complete dephosphorylation inactivates the mcm complex, preventing its binding to chromatin. Becomes actively phosphorylated during S phase once the mcm complex is assembled on the chromatin. This chromatin-associated phosphorylation occurs during the activation of the pre-Rcs and is independent of cdks. Phosphorylated by the cdc7-dbf4b complex.

The protein resides in the nucleus. It localises to the chromosome. It catalyses the reaction ATP + H2O = ADP + phosphate + H(+). Its function is as follows. Acts as a component of the MCM2-7 complex (MCM complex) which is the replicative helicase essential for 'once per cell cycle' DNA replication initiation and elongation in eukaryotic cells. Core component of CDC45-MCM-GINS (CMG) helicase, the molecular machine that unwinds template DNA during replication, and around which the replisome is built. The active ATPase sites in the MCM2-7 ring are formed through the interaction surfaces of two neighboring subunits such that a critical structure of a conserved arginine finger motif is provided in trans relative to the ATP-binding site of the Walker A box of the adjacent subunit. The six ATPase active sites, however, are likely to contribute differentially to the complex helicase activity. The sequence is that of DNA replication licensing factor mcm4 from Xenopus tropicalis (Western clawed frog).